The chain runs to 176 residues: Corrinoid adenosyltransferase (176 aa).

Residues 6–14 (TRTGDNGTT), Lys24, 131–136 (RRLERI), and Asn155 contribute to the ATP site.

Belongs to the Cob(I)alamin adenosyltransferase family.

The protein resides in the cytoplasm. The enzyme catalyses 2 cob(II)yrinate a,c diamide + reduced [electron-transfer flavoprotein] + 2 ATP = 2 adenosylcob(III)yrinate a,c-diamide + 2 triphosphate + oxidized [electron-transfer flavoprotein] + 3 H(+). It catalyses the reaction 2 cob(II)alamin + reduced [electron-transfer flavoprotein] + 2 ATP = 2 adenosylcob(III)alamin + 2 triphosphate + oxidized [electron-transfer flavoprotein] + 3 H(+). The protein operates within cofactor biosynthesis; adenosylcobalamin biosynthesis; adenosylcobalamin from cob(II)yrinate a,c-diamide: step 2/7. The polypeptide is Corrinoid adenosyltransferase (Citrobacter freundii).